Consider the following 536-residue polypeptide: Quinate permease (536 aa).

The Cytoplasmic portion of the chain corresponds to 1–26; the sequence is MTLLALKEDRPTPKAVYNWRVYTCAA. Residues 27–47 form a helical membrane-spanning segment; it reads IASFASCMIGYDSAFIGTTLA. Residues 48 to 74 lie on the Extracellular side of the membrane; the sequence is LPSFKKEFDFASYTPGALALLQSNIVS. The helical transmembrane segment at 75-95 threads the bilayer; sequence VYQAGAFFGSLFAFATSYFLG. Residues 96-98 lie on the Cytoplasmic side of the membrane; it reads RRK. The chain crosses the membrane as a helical span at residues 99–119; that stretch reads SLIAFSVVFIIGAAIMLAADG. Residues 120-131 lie on the Extracellular side of the membrane; the sequence is QGRGIAPIIAGR. A helical transmembrane segment spans residues 132–152; sequence VLAGIGVGGASNMVPIYISEL. The Cytoplasmic portion of the chain corresponds to 153 to 160; it reads APPAVRGR. A helical membrane pass occupies residues 161–181; the sequence is LVGIYELGWQIGGLVGFWINY. Residues 182–195 lie on the Extracellular side of the membrane; the sequence is GVNTTMAPTRSQWL. N184 carries an N-linked (GlcNAc...) asparagine glycan. The helical transmembrane segment at 196 to 216 threads the bilayer; that stretch reads IPFAVQLIPAGLLFLGSFWIP. At 217-285 the chain is on the cytoplasmic side; that stretch reads ESPRWLFANG…SLKQRKVQWR (69 aa). Residues 286–306 traverse the membrane as a helical segment; that stretch reads FFLGGMLFLWQNGSGINAINY. Residues 307-327 lie on the Extracellular side of the membrane; that stretch reads YSPTVFRSIGITGTNTGFLTT. Residues 328–349 form a helical membrane-spanning segment; sequence GIFGVVKMVLTIVWLLWLVDLV. Over 350–352 the chain is Cytoplasmic; it reads GRR. A helical transmembrane segment spans residues 353–373; that stretch reads RMLFIGATGGSLCMWFIGAYI. Residues 374 to 389 are Extracellular-facing; the sequence is KIAGPGSTKAEDAKLT. Residues 390–410 form a helical membrane-spanning segment; that stretch reads SGGIAAIFFFYLWTAFYTPSW. Residues 411–435 are Cytoplasmic-facing; it reads NGTPWVINSEMFDQNTRSLGQASAA. A helical membrane pass occupies residues 436 to 456; that stretch reads ANNWFWNFIISRFTPQMFIKM. The Extracellular portion of the chain corresponds to 457 to 458; the sequence is EY. A helical transmembrane segment spans residues 459–479; it reads GVYFFFASLMLLSIVFIYFFI. The Cytoplasmic portion of the chain corresponds to 480–536; that stretch reads PETKSIPLEAMDRLFEIKPVHNANKILMAELNFDRNPEREESSLDEKDRVTQTENAV. A compositionally biased stretch (basic and acidic residues) spans 516–530; it reads PEREESSLDEKDRVT. Residues 516 to 536 form a disordered region; it reads PEREESSLDEKDRVTQTENAV.

It belongs to the major facilitator superfamily. Sugar transporter (TC 2.A.1.1) family.

It is found in the membrane. In Neurospora terricola, this protein is Quinate permease (qa-y).